The chain runs to 152 residues: Calmodulin-like protein 2 (152 aa).

4 consecutive EF-hand domains span residues methionine 1 to methionine 36, valine 37 to glutamate 72, glutamate 74 to lysine 109, and arginine 112 to alanine 147. Ca(2+) is bound by residues aspartate 14, asparagine 16, aspartate 18, lysine 20, glutamate 25, aspartate 50, asparagine 52, aspartate 54, glutamate 61, aspartate 87, asparagine 89, aspartate 91, glutamate 98, aspartate 125, aspartate 127, aspartate 129, methionine 131, and glutamate 136.

It belongs to the calmodulin family.

Its function is as follows. Potential calcium sensor that is required for pollen tube attraction for ovule fertilization. In Arabidopsis thaliana (Mouse-ear cress), this protein is Calmodulin-like protein 2 (CML2).